The sequence spans 374 residues: Protein dip1 (374 aa).

The protein belongs to the LDB17 family.

It is found in the cytoplasm. The protein resides in the nucleus. Its subcellular location is the cell tip. May be involved in protein-linked oligosaccharide phosphorylation. The chain is Protein dip1 (dip1) from Schizosaccharomyces pombe (strain 972 / ATCC 24843) (Fission yeast).